We begin with the raw amino-acid sequence, 243 residues long: MSMLCYTLIIAFLIGIWAAPKSEDNVPLGSPATSDLSDTSCAQTHEGLKTSRNTDQRHPAPKKAEDQELGSVANIIVDPKLFQKRRFQSPRVLFSIQPPPLSRDEQSVEFLDNEDTLNRNIRTKRETHPVYNRGEHSVCDSVSVWVTNKTKATDIKGNMVTVMVDINLNNEVYKQYFFETKCRNPNPVPSGCRGTDSRHWNSYCTTTQTFVRALTMEGNQASWRFIRIDTACVCVIIRKTDNF.

Residues 1–18 form the signal peptide; sequence MSMLCYTLIIAFLIGIWA. A propeptide spanning residues 19-125 is cleaved from the precursor; it reads APKSEDNVPL…TLNRNIRTKR (107 aa). Residues 47–66 show a composition bias toward basic and acidic residues; sequence GLKTSRNTDQRHPAPKKAED. The segment at 47–67 is disordered; it reads GLKTSRNTDQRHPAPKKAEDQ. Intrachain disulfides connect Cys-139–Cys-204, Cys-182–Cys-232, and Cys-192–Cys-234. The N-linked (GlcNAc...) asparagine glycan is linked to Asn-148.

Belongs to the NGF-beta family. As to quaternary structure, homodimer; non-covalently linked. In terms of tissue distribution, expressed by the venom gland.

It is found in the secreted. Functionally, nerve growth factor is important for the development and maintenance of the sympathetic and sensory nervous systems. It stimulates division and differentiation of sympathetic and embryonic sensory neurons as well as basal forebrain cholinergic neurons in the brain. Its relevance in the snake venom is not clear. However, it has been shown to inhibit metalloproteinase-dependent proteolysis of platelet glycoprotein Ib alpha, suggesting a metalloproteinase inhibition to prevent metalloprotease autodigestion and/or protection against prey proteases. Binds a lipid between the two protein chains in the homodimer. The lipid-bound form promotes histamine relase from mouse mast cells, contrary to the lipid-free form. The sequence is that of Venom nerve growth factor 5 from Tropidechis carinatus (Australian rough-scaled snake).